Reading from the N-terminus, the 357-residue chain is Nicotinate-nucleotide--dimethylbenzimidazole phosphoribosyltransferase (357 aa).

The Proton acceptor role is filled by Glu323.

This sequence belongs to the CobT family.

It catalyses the reaction 5,6-dimethylbenzimidazole + nicotinate beta-D-ribonucleotide = alpha-ribazole 5'-phosphate + nicotinate + H(+). It participates in nucleoside biosynthesis; alpha-ribazole biosynthesis; alpha-ribazole from 5,6-dimethylbenzimidazole: step 1/2. Functionally, catalyzes the synthesis of alpha-ribazole-5'-phosphate from nicotinate mononucleotide (NAMN) and 5,6-dimethylbenzimidazole (DMB). This chain is Nicotinate-nucleotide--dimethylbenzimidazole phosphoribosyltransferase, found in Nitratidesulfovibrio vulgaris (strain ATCC 29579 / DSM 644 / CCUG 34227 / NCIMB 8303 / VKM B-1760 / Hildenborough) (Desulfovibrio vulgaris).